A 351-amino-acid chain; its full sequence is Divinyl chlorophyll a/b light-harvesting protein PcbC (351 aa).

A run of 6 helical transmembrane segments spans residues 27–47 (FIGS…GSTL), 81–101 (GVWT…FSAV), 140–160 (FILG…VEWA), 202–222 (VMSG…WHIA), 242–262 (AVLS…AFWC), and 309–329 (LSNV…WHAL).

It belongs to the PsbB/PsbC family. IsiA/Pcb subfamily. As to quaternary structure, the antenna complex consists of divinyl chlorophylls (a and b) and divinyl chlorophyll a/b binding proteins and binds more divinyl chlorophyll b than does the antenna complex from high-light-adapted Prochlorococcus. Divinyl chlorophyll a is required as a cofactor. It depends on divinyl chlorophyll b as a cofactor.

The protein resides in the cellular thylakoid membrane. Its function is as follows. The antenna complex functions as a light receptor, it captures and delivers excitation energy to photosystems II and I. The Prochlorales pcb genes are not related to higher plant LHCs. This chain is Divinyl chlorophyll a/b light-harvesting protein PcbC (pcbC), found in Prochlorococcus marinus (strain NATL2A).